Consider the following 330-residue polypeptide: DNA-directed RNA polymerase subunit alpha (330 aa).

The interval 1 to 236 (MQGSVTEFLK…EQLDAFVDLR (236 aa)) is alpha N-terminal domain (alpha-NTD). Positions 250–330 (FDPILLRPVD…NWPPASIAED (81 aa)) are alpha C-terminal domain (alpha-CTD).

It belongs to the RNA polymerase alpha chain family. Homodimer. The RNAP catalytic core consists of 2 alpha, 1 beta, 1 beta' and 1 omega subunit. When a sigma factor is associated with the core the holoenzyme is formed, which can initiate transcription.

The catalysed reaction is RNA(n) + a ribonucleoside 5'-triphosphate = RNA(n+1) + diphosphate. Functionally, DNA-dependent RNA polymerase catalyzes the transcription of DNA into RNA using the four ribonucleoside triphosphates as substrates. In Vibrio cholerae serotype O1 (strain ATCC 39315 / El Tor Inaba N16961), this protein is DNA-directed RNA polymerase subunit alpha.